We begin with the raw amino-acid sequence, 239 residues long: Purine nucleoside phosphorylase DeoD-type (239 aa).

His-5 contributes to the a purine D-ribonucleoside binding site. Phosphate contacts are provided by residues Gly-21, Arg-25, Arg-44, and 88 to 91; that span reads RVGS. A purine D-ribonucleoside-binding positions include 180–182 and 204–205; these read EME and SD. Asp-205 (proton donor) is an active-site residue.

It belongs to the PNP/UDP phosphorylase family. In terms of assembly, homohexamer; trimer of homodimers.

It catalyses the reaction a purine D-ribonucleoside + phosphate = a purine nucleobase + alpha-D-ribose 1-phosphate. It carries out the reaction a purine 2'-deoxy-D-ribonucleoside + phosphate = a purine nucleobase + 2-deoxy-alpha-D-ribose 1-phosphate. In terms of biological role, catalyzes the reversible phosphorolytic breakdown of the N-glycosidic bond in the beta-(deoxy)ribonucleoside molecules, with the formation of the corresponding free purine bases and pentose-1-phosphate. The polypeptide is Purine nucleoside phosphorylase DeoD-type (Salmonella gallinarum (strain 287/91 / NCTC 13346)).